The chain runs to 292 residues: MDAETECCKCHLLDLPWEDVLVTHIFCYLPLRQLVRLQRVSKQFYALIQVYLANCRTFDLTQIGPSLPKEAFCNILRDNKVLQNLSVQNCSDWVTDTELLPVIGQNQHLLRVDMRGCDRLTRHSLVAVSLSCTHLQYLGLAHCEWVDSLSIRSLADHCGGLRSIDLTACRQLKDEAICYLSKKCLKMRSLSVAVNANITDVSVEEVAKNCRELEQLDLTGCLRVRNDSIRTVAEYCPKLQSLKVNHCHNVTESSLDPLRKRNVEIDVEPPLQRALVLLQDVVGFAPFINLQI.

The 48-residue stretch at 12 to 59 folds into the F-box domain; it reads LLDLPWEDVLVTHIFCYLPLRQLVRLQRVSKQFYALIQVYLANCRTFD. LRR repeat units lie at residues 134-155, 160-181, 186-207, 212-233, and 238-259; these read HLQYLGLAHCEWVDSLSIRSLA, GLRSIDLTACRQLKDEAICYLS, KMRSLSVAVNANITDVSVEEVA, ELEQLDLTGCLRVRNDSIRTVA, and KLQSLKVNHCHNVTESSLDPLR.

It belongs to the FBXL15 family. In terms of assembly, part of the SCF (SKP1-CUL1-F-box) E3 ubiquitin-protein ligase complex SCF(FBXL15).

It is found in the cytoplasm. Its pathway is protein modification; protein ubiquitination. Substrate recognition component of a SCF (SKP1-CUL1-F-box protein) E3 ubiquitin-protein ligase complex which mediates the ubiquitination and subsequent proteasomal degradation of target proteins. Acts as a positive regulator of the BMP signaling pathway. Required for dorsal/ventral pattern formation. This is F-box/LRR-repeat protein 15 (fbxl15) from Salmo salar (Atlantic salmon).